The primary structure comprises 162 residues: ATP synthase subunit b (162 aa).

The chain crosses the membrane as a helical span at residues 6 to 26 (PDIGLLFWMLLSFGIVFFVAA).

This sequence belongs to the ATPase B chain family. F-type ATPases have 2 components, F(1) - the catalytic core - and F(0) - the membrane proton channel. F(1) has five subunits: alpha(3), beta(3), gamma(1), delta(1), epsilon(1). F(0) has three main subunits: a(1), b(2) and c(10-14). The alpha and beta chains form an alternating ring which encloses part of the gamma chain. F(1) is attached to F(0) by a central stalk formed by the gamma and epsilon chains, while a peripheral stalk is formed by the delta and b chains.

It localises to the cell inner membrane. F(1)F(0) ATP synthase produces ATP from ADP in the presence of a proton or sodium gradient. F-type ATPases consist of two structural domains, F(1) containing the extramembraneous catalytic core and F(0) containing the membrane proton channel, linked together by a central stalk and a peripheral stalk. During catalysis, ATP synthesis in the catalytic domain of F(1) is coupled via a rotary mechanism of the central stalk subunits to proton translocation. Functionally, component of the F(0) channel, it forms part of the peripheral stalk, linking F(1) to F(0). The polypeptide is ATP synthase subunit b (Azobacteroides pseudotrichonymphae genomovar. CFP2).